Here is a 309-residue protein sequence, read N- to C-terminus: Sulfate adenylyltransferase subunit 2 (309 aa).

It belongs to the PAPS reductase family. CysD subfamily. Heterodimer composed of CysD, the smaller subunit, and CysN.

It catalyses the reaction sulfate + ATP + H(+) = adenosine 5'-phosphosulfate + diphosphate. Its pathway is sulfur metabolism; hydrogen sulfide biosynthesis; sulfite from sulfate: step 1/3. In terms of biological role, with CysN forms the ATP sulfurylase (ATPS) that catalyzes the adenylation of sulfate producing adenosine 5'-phosphosulfate (APS) and diphosphate, the first enzymatic step in sulfur assimilation pathway. APS synthesis involves the formation of a high-energy phosphoric-sulfuric acid anhydride bond driven by GTP hydrolysis by CysN coupled to ATP hydrolysis by CysD. The chain is Sulfate adenylyltransferase subunit 2 from Methylorubrum extorquens (strain CM4 / NCIMB 13688) (Methylobacterium extorquens).